Here is a 127-residue protein sequence, read N- to C-terminus: Fluoride-specific ion channel FluC (127 aa).

Helical transmembrane passes span 6-26, 37-57, 67-87, and 96-116; these read LAISLGASAGAVSRWLLGLGF, TLLANLLGGYLIGIAVTFFAA, LLVITGFLGGLTTFSTFSAEV, and LLWAGGAIAVHVIGSLVMTLL. Na(+) is bound by residues G75 and T78.

The protein belongs to the fluoride channel Fluc/FEX (TC 1.A.43) family.

It is found in the cell inner membrane. The enzyme catalyses fluoride(in) = fluoride(out). With respect to regulation, na(+) is not transported, but it plays an essential structural role and its presence is essential for fluoride channel function. In terms of biological role, fluoride-specific ion channel. Important for reducing fluoride concentration in the cell, thus reducing its toxicity. This Tolumonas auensis (strain DSM 9187 / NBRC 110442 / TA 4) protein is Fluoride-specific ion channel FluC.